A 189-amino-acid chain; its full sequence is Elongation factor P (189 aa).

It belongs to the elongation factor P family.

Its subcellular location is the cytoplasm. The protein operates within protein biosynthesis; polypeptide chain elongation. Involved in peptide bond synthesis. Stimulates efficient translation and peptide-bond synthesis on native or reconstituted 70S ribosomes in vitro. Probably functions indirectly by altering the affinity of the ribosome for aminoacyl-tRNA, thus increasing their reactivity as acceptors for peptidyl transferase. In Chloroflexus aggregans (strain MD-66 / DSM 9485), this protein is Elongation factor P.